Consider the following 388-residue polypeptide: Integrase (388 aa).

A Core-binding (CB) domain is found at 70-151; the sequence is YTVADAVNDW…CLNRAVKRAM (82 aa). Positions 173 to 379 constitute a Tyr recombinase domain; sequence RPSKALTFAQ…VIQTGAVVMD (207 aa). Residues Arg-208, Lys-249, Arg-330, and His-353 contribute to the active site. The active-site O-(3'-phospho-DNA)-tyrosine intermediate is Tyr-363.

Belongs to the 'phage' integrase family.

Required for integration of pSAM2. This chain is Integrase (int), found in Streptomyces ambofaciens.